The chain runs to 187 residues: uncharacterized protein (187 aa).

Transmembrane regions (helical) follow at residues 29–50 (IFID…VYWI), 70–92 (FVIG…INAY), 128–147 (IFFA…SVLR), and 154–176 (LALV…ISYL).

It is found in the cell membrane. This is an uncharacterized protein from Archaeoglobus fulgidus (strain ATCC 49558 / DSM 4304 / JCM 9628 / NBRC 100126 / VC-16).